A 360-amino-acid chain; its full sequence is Phospho-N-acetylmuramoyl-pentapeptide-transferase (360 aa).

The next 10 helical transmembrane spans lie at 26–46 (AILGLMTALMFSLWWGPKMIA), 73–93 (TMGGLLILAGVFISVLLWGDL), 97–117 (YVWVVLFVLGSFGLIGFIDDY), 132–152 (WKYLLQSLAALLIAVYLYASA), 168–188 (VMPQLGGFFIVLVYFTIVGSS), 199–219 (GLAIMPTVMVAAAFALIAYLS), 236–256 (AGELVIVCTAIVGAGLGFLWF), 263–283 (VFMGDVGSLSLGAALGTIAVL), 288–308 (ILLVIMGGVFVMETVSVILQV), and 338–358 (VIVRFWIISLFLVLLGLATLK).

This sequence belongs to the glycosyltransferase 4 family. MraY subfamily. Requires Mg(2+) as cofactor.

The protein localises to the cell inner membrane. It carries out the reaction UDP-N-acetyl-alpha-D-muramoyl-L-alanyl-gamma-D-glutamyl-meso-2,6-diaminopimeloyl-D-alanyl-D-alanine + di-trans,octa-cis-undecaprenyl phosphate = di-trans,octa-cis-undecaprenyl diphospho-N-acetyl-alpha-D-muramoyl-L-alanyl-D-glutamyl-meso-2,6-diaminopimeloyl-D-alanyl-D-alanine + UMP. The protein operates within cell wall biogenesis; peptidoglycan biosynthesis. Catalyzes the initial step of the lipid cycle reactions in the biosynthesis of the cell wall peptidoglycan: transfers peptidoglycan precursor phospho-MurNAc-pentapeptide from UDP-MurNAc-pentapeptide onto the lipid carrier undecaprenyl phosphate, yielding undecaprenyl-pyrophosphoryl-MurNAc-pentapeptide, known as lipid I. The polypeptide is Phospho-N-acetylmuramoyl-pentapeptide-transferase (Shewanella halifaxensis (strain HAW-EB4)).